The following is a 146-amino-acid chain: Holo-[acyl-carrier-protein] synthase (146 aa).

Mg(2+) is bound by residues Asp9 and Glu63.

This sequence belongs to the P-Pant transferase superfamily. AcpS family. The cofactor is Mg(2+).

Its subcellular location is the cytoplasm. It catalyses the reaction apo-[ACP] + CoA = holo-[ACP] + adenosine 3',5'-bisphosphate + H(+). In terms of biological role, transfers the 4'-phosphopantetheine moiety from coenzyme A to a Ser of acyl-carrier-protein. The chain is Holo-[acyl-carrier-protein] synthase from Burkholderia ambifaria (strain MC40-6).